The sequence spans 224 residues: Dimethyl sulfoxide reductase transcriptional activator (224 aa).

One can recognise an HTH bat-type domain in the interval 158–209; the sequence is LTDKQREAAAAAVAKGYYATPRGADLSDLATALGISKSAVSQRLSAVESKLA.

Functionally, involved in activating dmsEABCD gene expression related to dimethyl sulfoxide (DMSO) reductase. Required for anaerobic respiration on dimethyl sulfoxide (DMSO) and trimethylamine N-oxide (TMAO). This is Dimethyl sulfoxide reductase transcriptional activator (dmsR) from Halobacterium salinarum (strain ATCC 700922 / JCM 11081 / NRC-1) (Halobacterium halobium).